The following is a 369-amino-acid chain: Protein disulfide-isomerase erp38 (369 aa).

An N-terminal signal peptide occupies residues 1-18 (MVLLKSLVVASLAAAVAA). Thioredoxin domains are found at residues 19–130 (KSAV…EKTG) and 131–251 (VKAR…EKAG). Active-site nucleophile residues include Cys-50, Cys-53, Cys-170, and Cys-173. 2 cysteine pairs are disulfide-bonded: Cys-50–Cys-53 and Cys-170–Cys-173. The Prevents secretion from ER signature appears at 366–369 (KEEL).

It belongs to the protein disulfide isomerase family.

It localises to the endoplasmic reticulum lumen. It carries out the reaction Catalyzes the rearrangement of -S-S- bonds in proteins.. This is Protein disulfide-isomerase erp38 (erp38) from Neurospora crassa (strain ATCC 24698 / 74-OR23-1A / CBS 708.71 / DSM 1257 / FGSC 987).